The chain runs to 318 residues: tRNA-cytidine(32) 2-sulfurtransferase (318 aa).

The PP-loop motif motif lies at 52–57 (SGGKDS). [4Fe-4S] cluster is bound by residues Cys127, Cys130, and Cys218.

This sequence belongs to the TtcA family. As to quaternary structure, homodimer. Requires Mg(2+) as cofactor. [4Fe-4S] cluster serves as cofactor.

The protein localises to the cytoplasm. The enzyme catalyses cytidine(32) in tRNA + S-sulfanyl-L-cysteinyl-[cysteine desulfurase] + AH2 + ATP = 2-thiocytidine(32) in tRNA + L-cysteinyl-[cysteine desulfurase] + A + AMP + diphosphate + H(+). It functions in the pathway tRNA modification. Its function is as follows. Catalyzes the ATP-dependent 2-thiolation of cytidine in position 32 of tRNA, to form 2-thiocytidine (s(2)C32). The sulfur atoms are provided by the cysteine/cysteine desulfurase (IscS) system. This Actinobacillus pleuropneumoniae serotype 3 (strain JL03) protein is tRNA-cytidine(32) 2-sulfurtransferase.